We begin with the raw amino-acid sequence, 254 residues long: Low affinity immunoglobulin gamma Fc region receptor III-A (254 aa).

An N-terminal signal peptide occupies residues Met-1–Ala-20. Over Ala-21 to Gln-209 the chain is Extracellular. Ig-like C2-type domains follow at residues Pro-23–Gln-104 and Lys-121–Arg-174. Asn-42, Asn-63, Asn-166, and Asn-181 each carry an N-linked (GlcNAc...) asparagine glycan. Cystine bridges form between Cys-47-Cys-90 and Cys-129-Cys-173. Residues Ile-210 to Val-230 form a helical membrane-spanning segment. Over Arg-231–Lys-254 the chain is Cytoplasmic.

In terms of assembly, forms a heterooligomeric complex with ITAM-containing signaling subunits FCER1G. Interacts (via transmembrane domain) with signaling subunits; this interaction is a prerequisite for receptor complex expression on the cell surface and intracellular signal transduction. Binds the Fc region of antigen-complexed IgG. N-glycosylated. Post-translationally, phosphorylated following receptor ligation.

It is found in the cell membrane. Functionally, receptor for the invariable Fc fragment of immunoglobulin gamma (IgG). Binds with intermediate affinity to both IgG2a and IgG2b. Can bind to IgG2a and IgG2b monomers. Does not display binding to IgG1 or IgG3. Recognizes neutralizing virus-specific IgGs displayed on the cell surface of infected cells and triggers antibody-dependent cellular cytotoxicity (ADCC). Confers protection to lethal influenza virus infection. On splenic dendritic cells, uptakes antigen immune complexes and efficiently divert them into MHC class I and II antigen presentation pathways to provide for superior priming of CD4-positive and CD8-positive T cell immune responses. Mediates neutrophil activation by IgG complexes redundantly with FCGR2A. Plays a role in promoting bone resorption by enhancing osteoclast differentiation following binding to IgG2a. Also acts as a receptor for the Fc region of immunoglobulin epsilon (IgE). Binds with low affinity to both the a and b allotypes of IgE. Has also been shown to bind to IgE allotype a only but not to allotype b. Binds aggregated IgE but not the monomeric form and bound monomeric IgG is readily displaced by IgE complexes. Binding to IgE promotes macrophage-mediated phagocytosis, antigen presentation to T cells, production of pro-inflammatory cytokines and the late phase of cutaneous allergic reactions. Mediates enhanced ADCC in response to afucosylated IgGs. The protein is Low affinity immunoglobulin gamma Fc region receptor III-A of Cavia porcellus (Guinea pig).